Reading from the N-terminus, the 459-residue chain is GTPase Der (459 aa).

2 EngA-type G domains span residues 4-169 and 179-355; these read PLVA…PEVT and IAVS…AAHR. GTP contacts are provided by residues 10 to 17, 57 to 61, 120 to 123, 185 to 192, 232 to 236, and 297 to 300; these read GRPNVGKS, DTGGL, NKCE, DTAGI, and NKWD. The KH-like domain maps to 356-441; it reads KRVPTAVVNE…PIRFLWRGKS (86 aa).

It belongs to the TRAFAC class TrmE-Era-EngA-EngB-Septin-like GTPase superfamily. EngA (Der) GTPase family. In terms of assembly, associates with the 50S ribosomal subunit.

In terms of biological role, GTPase that plays an essential role in the late steps of ribosome biogenesis. This is GTPase Der from Synechococcus sp. (strain JA-2-3B'a(2-13)) (Cyanobacteria bacterium Yellowstone B-Prime).